We begin with the raw amino-acid sequence, 113 residues long: Urocortin-2 (113 aa).

Positions 1 to 23 (MMTRWALVVFVVLMLDRILFVPG) are cleaved as a signal peptide. Residues 24–71 (TPIPTFQLLPQNSLETTPSSVTSESSSGTTTGPSASWSNSKASPYLDT) constitute a propeptide that is removed on maturation. The span at 37–61 (LETTPSSVTSESSSGTTTGPSASWS) shows a compositional bias: low complexity. The disordered stretch occupies residues 37-64 (LETTPSSVTSESSSGTTTGPSASWSNSK). Valine 110 carries the post-translational modification Valine amide; partial.

The protein belongs to the sauvagine/corticotropin-releasing factor/urotensin I family. In terms of assembly, binds with high affinity to CRF receptors 2-alpha and 2-beta. Glycosylated.

It is found in the secreted. In terms of biological role, suppresses food intake, delays gastric emptying and decreases heat-induced edema. Might represent an endogenous ligand for maintaining homeostasis after stress. In Mus musculus (Mouse), this protein is Urocortin-2 (Ucn2).